A 430-amino-acid polypeptide reads, in one-letter code: Asparagine--tRNA ligase (430 aa).

It belongs to the class-II aminoacyl-tRNA synthetase family. As to quaternary structure, homodimer.

The protein localises to the cytoplasm. It catalyses the reaction tRNA(Asn) + L-asparagine + ATP = L-asparaginyl-tRNA(Asn) + AMP + diphosphate + H(+). The polypeptide is Asparagine--tRNA ligase (Bacillus velezensis (strain DSM 23117 / BGSC 10A6 / LMG 26770 / FZB42) (Bacillus amyloliquefaciens subsp. plantarum)).